The primary structure comprises 562 residues: NAD-dependent malic enzyme (562 aa).

The Proton donor role is filled by Tyr101. An NAD(+)-binding site is contributed by Arg154. The Proton acceptor role is filled by Lys172. Positions 243, 244, and 267 each coordinate a divalent metal cation. The NAD(+) site is built by Asp267 and Asn415.

Belongs to the malic enzymes family. In terms of assembly, homotetramer. Mg(2+) is required as a cofactor. Requires Mn(2+) as cofactor.

It carries out the reaction (S)-malate + NAD(+) = pyruvate + CO2 + NADH. The enzyme catalyses oxaloacetate + H(+) = pyruvate + CO2. The polypeptide is NAD-dependent malic enzyme (Shewanella frigidimarina (strain NCIMB 400)).